Consider the following 186-residue polypeptide: Nicotinamide-nucleotide adenylyltransferase (186 aa).

Belongs to the archaeal NMN adenylyltransferase family.

It localises to the cytoplasm. It catalyses the reaction beta-nicotinamide D-ribonucleotide + ATP + H(+) = diphosphate + NAD(+). Its pathway is cofactor biosynthesis; NAD(+) biosynthesis; NAD(+) from nicotinamide D-ribonucleotide: step 1/1. The protein is Nicotinamide-nucleotide adenylyltransferase of Pyrococcus abyssi (strain GE5 / Orsay).